We begin with the raw amino-acid sequence, 1130 residues long: Tyrosine-protein kinase ABL1 (1130 aa).

Positions 1-60 (MLEICLKLVGCKSKKGLSSSSSCYLEEALQRPVASDFEPQGLSEAARWNSKENLLAGPSE) are CAP. Residue L2 is the site of N-myristoyl glycine attachment. S50 bears the Phosphoserine mark. Positions 61–121 (NDPNLFVALY…PSNYITPVNS (61 aa)) constitute an SH3 domain. Y70 carries the post-translational modification Phosphotyrosine; by autocatalysis. Phosphotyrosine is present on residues Y115, Y128, Y139, Y172, Y185, and Y215. The SH2 domain maps to 127 to 217 (WYHGPVSRNA…GLITTLHYPA (91 aa)). At Y226 the chain carries Phosphotyrosine; by autocatalysis. S229 carries the post-translational modification Phosphoserine. A Protein kinase domain is found at 242-493 (ITMKHKLGGG…PSFAEIHQAF (252 aa)). Position 248-256 (248-256 (LGGGQYGEV)) interacts with ATP. Residues Y253 and Y257 each carry the phosphotyrosine modification. ATP is bound by residues K271 and 316 to 322 (EFMTYGN). The active-site Proton acceptor is the D363. The Kinase activation loop signature appears at 381–405 (DFGLSRLMTGDTYTAHAGAKFPIKW). Position 393 is a phosphotyrosine; by autocatalysis and SRC-type Tyr-kinases (Y393). Y413 is modified (phosphotyrosine). Phosphoserine is present on residues S446, S559, and S569. Residues 518–996 (AVSTLLQAPE…SASSALAGDQ (479 aa)) form a disordered region. Basic and acidic residues predominate over residues 537 to 566 (RAAEHRDTTDVPEMPHSKGQGESDPLDHEP). Over residues 586-597 (EDERLLPKDKKT) the composition is skewed to basic and acidic residues. The Nuclear localization signal 1 signature appears at 605–609 (KKKKK). Residues S618 and S619 each carry the phosphoserine; by PAK2 modification. A phosphoserine mark is found at S620, S659, and S683. A compositionally biased stretch (basic and acidic residues) spans 620–640 (SFREMDGQPERRGAGEEEGRD). The span at 689 to 698 (KSSTLTSSRL) shows a compositional bias: polar residues. A Nuclear localization signal 2 motif is present at residues 709–715 (SSKRFLR). K711 bears the N6-acetyllysine; by EP300 mark. At S718 the chain carries Phosphoserine. 2 positions are modified to phosphothreonine: T735 and T751. Residues 740–752 (LQSTGRQFDSSTF) show a composition bias toward polar residues. Positions 755–774 (HKSEKPALPRKRAGENRSDQ) are enriched in basic and acidic residues. The Nuclear localization signal 3 signature appears at 762 to 769 (LPRKRAGE). A Phosphothreonine modification is found at T781. Residues 788 to 802 (KKNEEAADEVFKDIM) are compositionally biased toward basic and acidic residues. Residues T814, T823, T844, and T852 each carry the phosphothreonine modification. S855 bears the Phosphoserine mark. A DNA-binding region spans residues 869–968 (PAEESRVRRH…VLPATPKPQS (100 aa)). The span at 881 to 891 (SSESPGRDKGK) shows a compositional bias: basic and acidic residues. Positions 905–915 (ASAGKAGGKPS) are enriched in low complexity. A Phosphoserine modification is found at S917. Positions 953–1130 (EGLKKPVLPA…VKEISDIVQR (178 aa)) are F-actin-binding. Residues 965 to 975 (KPQSAKPSGTP) show a composition bias toward polar residues. S977 carries the phosphoserine modification. The segment covering 984–993 (TLPSASSALA) has biased composition (low complexity). Positions 1090–1100 (LENNLRELQIC) match the Nuclear export signal motif.

The protein belongs to the protein kinase superfamily. Tyr protein kinase family. ABL subfamily. As to quaternary structure, interacts with SORBS1 following insulin stimulation. Found in a trimolecular complex containing CDK5 and CABLES1. Interacts with CABLES1 and PSTPIP1. Interacts with ZDHHC16, ITGB1 and HCK. Interacts with STX17; probably phosphorylates STX17. Interacts with INPPL1/SHIP2. Interacts with the 14-3-3 proteins, YWHAB, YWHAE, YWHAG, YWHAH, SFN and YWHAZ; the interaction with 14-3-3 proteins requires phosphorylation on Thr-735 and, sequesters ABL1 into the cytoplasm. Interacts with ABI1, ABI2, BCR, CRK, FGR, FYN, HCK, LYN, PSMA7 RAD9A, RAD51, RAD52, TP73 and WASF3. A complex made of ABL1, CTTN and MYLK regulates cortical actin-based cytoskeletal rearrangement critical to sphingosine 1-phosphate (S1P)-mediated endothelial cell (EC) barrier enhancement. Interacts (via SH3 domain) with CASP9; the interaction is direct and increases in the response of cells to genotoxic stress and ABL1/c-Abl activation. Found in a complex with ABL1, ABL2, CRK and UNC119; leading to the inhibition of CRK phosphorylation by ABL kinases. Interacts with TBX21. Interacts with NEDD9/HEF1; interaction is induced by CXCL12 promotion of ABL-mediated phosphorylation of NEDD9/HEF1. It depends on Mg(2+) as a cofactor. Acetylated at Lys-711 by EP300 which promotes the cytoplasmic translocation. In terms of processing, phosphorylation at Tyr-70 by members of the SRC family of kinases disrupts SH3 domain-based autoinhibitory interactions and intermolecular associations, such as that with ABI1, and also enhances kinase activity. Phosphorylation at Tyr-226 and Tyr-393 correlate with increased activity. DNA damage-induced activation of ABL1 requires the function of ATM and Ser-446 phosphorylation. Phosphorylation at Ser-569 has been attributed to a CDC2-associated kinase and is coupled to cell division. Phosphorylation at Ser-618 and Ser-619 by PAK2 increases binding to CRK and reduces binding to ABI1. Phosphorylation on Thr-735 is required for binding 14-3-3 proteins for cytoplasmic translocation. Phosphorylated by PRKDC. Post-translationally, polyubiquitinated. Polyubiquitination of ABL1 leads to degradation. Widely expressed.

The protein resides in the cytoplasm. It is found in the cytoskeleton. Its subcellular location is the nucleus. It localises to the mitochondrion. The protein localises to the nucleus membrane. The enzyme catalyses L-tyrosyl-[protein] + ATP = O-phospho-L-tyrosyl-[protein] + ADP + H(+). With respect to regulation, stabilized in the inactive form by an association between the SH3 domain and the SH2-TK linker region, interactions of the N-terminal cap, and contributions from an N-terminal myristoyl group and phospholipids. Activated by autophosphorylation as well as by SRC-family kinase-mediated phosphorylation. Activated by RIN1 binding to the SH2 and SH3 domains. Also stimulated by cell death inducers and DNA-damage. Phosphatidylinositol 4,5-bisphosphate (PIP2), a highly abundant phosphoinositide known to regulate cytoskeletal and membrane proteins, also inhibits the tyrosine kinase activity. Activated by 5-(1,3-diaryl-1H-pyrazol-4-yl)hydantoin, 5-[3-(4-fluorophenyl)-1-phenyl-1H-pyrazol-4-yl]-2,4-imidazolidinedione (DPH). Inhibited by ABI1, whose activity is controlled by ABL1 itself through tyrosine phosphorylation. Also inhibited by imatinib mesylate (Gleevec) which is used for the treatment of chronic myeloid leukemia (CML), and by VX-680, an inhibitor that also acts on imatinib-resistant mutants. Its function is as follows. Non-receptor tyrosine-protein kinase that plays a role in many key processes linked to cell growth and survival such as cytoskeleton remodeling in response to extracellular stimuli, cell motility and adhesion, receptor endocytosis, autophagy, DNA damage response and apoptosis. Coordinates actin remodeling through tyrosine phosphorylation of proteins controlling cytoskeleton dynamics like WASF3 (involved in branch formation); ANXA1 (involved in membrane anchoring); DBN1, DBNL, CTTN, RAPH1 and ENAH (involved in signaling); or MAPT and PXN (microtubule-binding proteins). Phosphorylation of WASF3 is critical for the stimulation of lamellipodia formation and cell migration. Involved in the regulation of cell adhesion and motility through phosphorylation of key regulators of these processes such as BCAR1, CRK, CRKL, DOK1, EFS or NEDD9. Phosphorylates multiple receptor tyrosine kinases and more particularly promotes endocytosis of EGFR, facilitates the formation of neuromuscular synapses through MUSK, inhibits PDGFRB-mediated chemotaxis and modulates the endocytosis of activated B-cell receptor complexes. Other substrates which are involved in endocytosis regulation are the caveolin (CAV1) and RIN1. Moreover, ABL1 regulates the CBL family of ubiquitin ligases that drive receptor down-regulation and actin remodeling. Phosphorylation of CBL leads to increased EGFR stability. Involved in late-stage autophagy by regulating positively the trafficking and function of lysosomal components. ABL1 targets to mitochondria in response to oxidative stress and thereby mediates mitochondrial dysfunction and cell death. In response to oxidative stress, phosphorylates serine/threonine kinase PRKD2 at 'Tyr-717'. ABL1 is also translocated in the nucleus where it has DNA-binding activity and is involved in DNA-damage response and apoptosis. Many substrates are known mediators of DNA repair: DDB1, DDB2, ERCC3, ERCC6, RAD9A, RAD51, RAD52 or WRN. Activates the proapoptotic pathway when the DNA damage is too severe to be repaired. Phosphorylates TP73, a primary regulator for this type of damage-induced apoptosis. Phosphorylates the caspase CASP9 on 'Tyr-153' and regulates its processing in the apoptotic response to DNA damage. Phosphorylates PSMA7 that leads to an inhibition of proteasomal activity and cell cycle transition blocks. ABL1 also acts as a regulator of multiple pathological signaling cascades during infection. Several known tyrosine-phosphorylated microbial proteins have been identified as ABL1 substrates. This is the case of A36R of Vaccinia virus, Tir (translocated intimin receptor) of pathogenic E.coli and possibly Citrobacter, CagA (cytotoxin-associated gene A) of H.pylori, or AnkA (ankyrin repeat-containing protein A) of A.phagocytophilum. Pathogens can highjack ABL1 kinase signaling to reorganize the host actin cytoskeleton for multiple purposes, like facilitating intracellular movement and host cell exit. Finally, functions as its own regulator through autocatalytic activity as well as through phosphorylation of its inhibitor, ABI1. Regulates T-cell differentiation in a TBX21-dependent manner. Positively regulates chemokine-mediated T-cell migration, polarization, and homing to lymph nodes and immune-challenged tissues, potentially via activation of NEDD9/HEF1 and RAP1. Phosphorylates TBX21 on tyrosine residues leading to an enhancement of its transcriptional activator activity. The chain is Tyrosine-protein kinase ABL1 (ABL1) from Homo sapiens (Human).